Reading from the N-terminus, the 349-residue chain is Large ribosomal subunit protein uL2mz, N-terminal part (349 aa).

This sequence belongs to the universal ribosomal protein uL2 family. Component of the mitochondrial ribosome large subunit.

The protein resides in the mitochondrion. This chain is Large ribosomal subunit protein uL2mz, N-terminal part, found in Arabidopsis thaliana (Mouse-ear cress).